The chain runs to 586 residues: Aspartate--tRNA(Asp/Asn) ligase (586 aa).

An L-aspartate-binding site is contributed by Glu176. The tract at residues 200–203 (QIFK) is aspartate. Arg222 is an L-aspartate binding site. ATP contacts are provided by residues 222 to 224 (RDE) and Gln231. An L-aspartate-binding site is contributed by His449. Glu483 serves as a coordination point for ATP. Arg490 lines the L-aspartate pocket. 535–538 (GIDR) contributes to the ATP binding site.

This sequence belongs to the class-II aminoacyl-tRNA synthetase family. Type 1 subfamily. Homodimer.

The protein localises to the cytoplasm. It carries out the reaction tRNA(Asx) + L-aspartate + ATP = L-aspartyl-tRNA(Asx) + AMP + diphosphate. Functionally, aspartyl-tRNA synthetase with relaxed tRNA specificity since it is able to aspartylate not only its cognate tRNA(Asp) but also tRNA(Asn). Reaction proceeds in two steps: L-aspartate is first activated by ATP to form Asp-AMP and then transferred to the acceptor end of tRNA(Asp/Asn). In Brachyspira hyodysenteriae (strain ATCC 49526 / WA1), this protein is Aspartate--tRNA(Asp/Asn) ligase.